The primary structure comprises 443 residues: Methyl-coenzyme M reductase subunit beta (443 aa).

Tyr367 provides a ligand contact to coenzyme M. Residue Gly369 coordinates coenzyme B.

This sequence belongs to the methyl-coenzyme M reductase beta subunit family. MCR is a hexamer of two alpha, two beta, and two gamma chains, forming a dimer of heterotrimers. Requires coenzyme F430 as cofactor.

The protein resides in the cytoplasm. It carries out the reaction coenzyme B + methyl-coenzyme M = methane + coenzyme M-coenzyme B heterodisulfide. Its pathway is one-carbon metabolism; methyl-coenzyme M reduction; methane from methyl-coenzyme M: step 1/1. Its function is as follows. Component of the methyl-coenzyme M reductase (MCR) I that catalyzes the reductive cleavage of methyl-coenzyme M (CoM-S-CH3 or 2-(methylthio)ethanesulfonate) using coenzyme B (CoB or 7-mercaptoheptanoylthreonine phosphate) as reductant which results in the production of methane and the mixed heterodisulfide of CoB and CoM (CoM-S-S-CoB). This is the final step in methanogenesis. In Methanococcus voltae, this protein is Methyl-coenzyme M reductase subunit beta (mcrB).